The sequence spans 323 residues: Beta-ketoacyl-[acyl-carrier-protein] synthase III (323 aa).

Catalysis depends on residues Cys113 and His250. The interval 251-255 (QANRR) is ACP-binding. Residue Asn280 is part of the active site.

Belongs to the thiolase-like superfamily. FabH family. Homodimer.

It is found in the cytoplasm. The catalysed reaction is malonyl-[ACP] + acetyl-CoA + H(+) = 3-oxobutanoyl-[ACP] + CO2 + CoA. It participates in lipid metabolism; fatty acid biosynthesis. Functionally, catalyzes the condensation reaction of fatty acid synthesis by the addition to an acyl acceptor of two carbons from malonyl-ACP. Catalyzes the first condensation reaction which initiates fatty acid synthesis and may therefore play a role in governing the total rate of fatty acid production. Possesses both acetoacetyl-ACP synthase and acetyl transacylase activities. Its substrate specificity determines the biosynthesis of branched-chain and/or straight-chain of fatty acids. The protein is Beta-ketoacyl-[acyl-carrier-protein] synthase III of Allorhizobium ampelinum (strain ATCC BAA-846 / DSM 112012 / S4) (Agrobacterium vitis (strain S4)).